A 796-amino-acid chain; its full sequence is Nuclear GTPase SLIP-GC (796 aa).

107-114 (GITGAGKS) lines the GTP pocket. Coiled coils occupy residues 158–185 (SDQEWKAELKDLTKLLHRAEQSGEEEAD) and 742–776 (GLCKELADVRNEQKEMEKLYRSLREVAENAQLRRS).

The protein localises to the nucleus speckle. Nuclear GTPase found in germinal center B-cells, where it may inhibit function of the activation-induced cytidine deaminase AICDA. Reduces somatic hypermutation in B-cells which may enhance genome stability. In Mus musculus (Mouse), this protein is Nuclear GTPase SLIP-GC.